A 464-amino-acid chain; its full sequence is Glutamyl-tRNA reductase (464 aa).

Residues 47-50 (TCNR), serine 145, 150-152 (EPQ), and glutamine 156 contribute to the substrate site. Catalysis depends on cysteine 48, which acts as the Nucleophile. An NADP(+)-binding site is contributed by 225-230 (AAGEMN).

The protein belongs to the glutamyl-tRNA reductase family. Homodimer.

It catalyses the reaction (S)-4-amino-5-oxopentanoate + tRNA(Glu) + NADP(+) = L-glutamyl-tRNA(Glu) + NADPH + H(+). The protein operates within porphyrin-containing compound metabolism; protoporphyrin-IX biosynthesis; 5-aminolevulinate from L-glutamyl-tRNA(Glu): step 1/2. Its function is as follows. Catalyzes the NADPH-dependent reduction of glutamyl-tRNA(Glu) to glutamate 1-semialdehyde (GSA). In Psychrobacter cryohalolentis (strain ATCC BAA-1226 / DSM 17306 / VKM B-2378 / K5), this protein is Glutamyl-tRNA reductase.